Reading from the N-terminus, the 196-residue chain is Large ribosomal subunit protein eL15 (196 aa).

Residues 162-196 (RGLTNAGRSNRGLQNRGKGAEHTRPSAGSGSRRGK) are disordered.

The protein belongs to the eukaryotic ribosomal protein eL15 family.

This is Large ribosomal subunit protein eL15 from Haloquadratum walsbyi (strain DSM 16790 / HBSQ001).